A 341-amino-acid polypeptide reads, in one-letter code: DNA-directed RNA polymerase subunit alpha (341 aa).

The segment at 1–223 is alpha N-terminal domain (alpha-NTD); the sequence is MEQKRPQLKA…DELSVFGNVE (223 aa). Residues 268-341 form an alpha C-terminal domain (alpha-CTD) region; it reads PQPFPTDQDT…LAQFGLALRD (74 aa).

It belongs to the RNA polymerase alpha chain family. In terms of assembly, homodimer. The RNAP catalytic core consists of 2 alpha, 1 beta, 1 beta' and 1 omega subunit. When a sigma factor is associated with the core the holoenzyme is formed, which can initiate transcription.

It catalyses the reaction RNA(n) + a ribonucleoside 5'-triphosphate = RNA(n+1) + diphosphate. In terms of biological role, DNA-dependent RNA polymerase catalyzes the transcription of DNA into RNA using the four ribonucleoside triphosphates as substrates. The polypeptide is DNA-directed RNA polymerase subunit alpha (Deinococcus radiodurans (strain ATCC 13939 / DSM 20539 / JCM 16871 / CCUG 27074 / LMG 4051 / NBRC 15346 / NCIMB 9279 / VKM B-1422 / R1)).